Reading from the N-terminus, the 92-residue chain is Kinetoplastid membrane protein 11B (92 aa).

This sequence belongs to the KMP-11 family. Monomer.

It is found in the cytoplasm. The protein localises to the cytoskeleton. The protein resides in the cell projection. It localises to the cilium. Its subcellular location is the flagellum. In terms of biological role, may be involved in the regulation of the cytoskeleton through interaction with the subpellicular microtubules. May be involved in parasite mobility and attachment to the surface of the host cell. Behaves as a strong immunogen during infection. In Leishmania infantum, this protein is Kinetoplastid membrane protein 11B (KMP-11B).